The sequence spans 360 residues: 3-dehydroquinate synthase (360 aa).

Residues Asp-69–Lys-74, Gly-103–Asp-107, Thr-127–Thr-128, Lys-140, Lys-149, and Cys-167–Thr-170 each bind NAD(+). Residues Glu-182, His-245, and His-262 each contribute to the Zn(2+) site.

This sequence belongs to the sugar phosphate cyclases superfamily. Dehydroquinate synthase family. Co(2+) serves as cofactor. It depends on Zn(2+) as a cofactor. Requires NAD(+) as cofactor.

Its subcellular location is the cytoplasm. The enzyme catalyses 7-phospho-2-dehydro-3-deoxy-D-arabino-heptonate = 3-dehydroquinate + phosphate. It participates in metabolic intermediate biosynthesis; chorismate biosynthesis; chorismate from D-erythrose 4-phosphate and phosphoenolpyruvate: step 2/7. Its function is as follows. Catalyzes the conversion of 3-deoxy-D-arabino-heptulosonate 7-phosphate (DAHP) to dehydroquinate (DHQ). The polypeptide is 3-dehydroquinate synthase (Aeromonas hydrophila subsp. hydrophila (strain ATCC 7966 / DSM 30187 / BCRC 13018 / CCUG 14551 / JCM 1027 / KCTC 2358 / NCIMB 9240 / NCTC 8049)).